A 53-amino-acid polypeptide reads, in one-letter code: Conotoxin Vc5.3 (53 aa).

Residues 1–15 (VILLLLTASAPSVDA) form the signal peptide. A propeptide spanning residues 16–41 (RPKTEDVPLSSFRDNTKSTLQRLLKR) is cleaved from the precursor.

It belongs to the conotoxin T superfamily. In terms of processing, contains 2 disulfide bonds that can be either 'C1-C3, C2-C4' or 'C1-C4, C2-C3', since these disulfide connectivities have been observed for conotoxins with cysteine framework V (for examples, see AC P0DQQ7 and AC P81755). As to expression, expressed by the venom duct.

It localises to the secreted. The polypeptide is Conotoxin Vc5.3 (Conus victoriae (Queen Victoria cone)).